Reading from the N-terminus, the 139-residue chain is D-ribose pyranase (139 aa).

Histidine 20 (proton donor) is an active-site residue. Substrate is bound by residues aspartate 28, histidine 106, and 128-130 (YAN).

It belongs to the RbsD / FucU family. RbsD subfamily. In terms of assembly, homodecamer.

It localises to the cytoplasm. It carries out the reaction beta-D-ribopyranose = beta-D-ribofuranose. It functions in the pathway carbohydrate metabolism; D-ribose degradation; D-ribose 5-phosphate from beta-D-ribopyranose: step 1/2. Catalyzes the interconversion of beta-pyran and beta-furan forms of D-ribose. This Escherichia coli O45:K1 (strain S88 / ExPEC) protein is D-ribose pyranase.